Consider the following 222-residue polypeptide: Small ribosomal subunit protein uS2 (222 aa).

It belongs to the universal ribosomal protein uS2 family.

This is Small ribosomal subunit protein uS2 from Karelsulcia muelleri (strain GWSS) (Sulcia muelleri).